We begin with the raw amino-acid sequence, 229 residues long: MSLLAQLDQKIAANGGLIVSCQPVPDSPLDKPEIVAAMALAAEQAGAVAIRIEGVANLQATRAVVSVPIIGIVKRDLEDSPVRITAYIEDVDALAQAGADIIAIDGTDRPRPVPVETLLARIHHHGLLAMTDCSTPEDGLACQKLGAEIIGTTLSGYTTPETPEEPDLALVKTLSDAGCRVIAEGRYNTPAQAADAMRHGAWAVTVGSAITRLEHICQWYNTVMKKAVL.

Belongs to the NanE family.

The catalysed reaction is an N-acyl-D-glucosamine 6-phosphate = an N-acyl-D-mannosamine 6-phosphate. The protein operates within amino-sugar metabolism; N-acetylneuraminate degradation; D-fructose 6-phosphate from N-acetylneuraminate: step 3/5. Converts N-acetylmannosamine-6-phosphate (ManNAc-6-P) to N-acetylglucosamine-6-phosphate (GlcNAc-6-P). In Escherichia coli O127:H6 (strain E2348/69 / EPEC), this protein is Putative N-acetylmannosamine-6-phosphate 2-epimerase.